We begin with the raw amino-acid sequence, 407 residues long: uncharacterized protein (407 aa).

Helical transmembrane passes span 22–42 (IVSV…PLAV), 51–71 (LGFS…ATLA), 101–121 (ALLL…GLLV), 126–146 (VLGI…IGRV), 154–174 (VISW…PVGV), 179–199 (ALIP…GYYL), 227–247 (GLGL…ITLY), 258–278 (LSLT…ANTI), 286–306 (VAIV…LAPV), 309–329 (VALV…PALG), 347–367 (AYSV…GYVA), and 369–389 (AFGY…GVAL).

The protein belongs to the major facilitator superfamily. YhhS family.

It localises to the cell inner membrane. This is an uncharacterized protein from Burkholderia mallei (strain NCTC 10229).